Here is a 134-residue protein sequence, read N- to C-terminus: Acyl carrier protein, chloroplastic (134 aa).

A chloroplast-targeting transit peptide spans 1-51 (MATTFSASVSTLATSLATPTRISFQKPALVSRTNLSFNLRRSIPTRLSVSC). The Carrier domain maps to 55–130 (PETIEKVSKI…EAAELIEELV (76 aa)). Serine 90 carries the post-translational modification O-(pantetheine 4'-phosphoryl)serine.

Belongs to the acyl carrier protein (ACP) family. Post-translationally, 4'-phosphopantetheine is transferred from CoA to a specific serine of apo-ACP by acpS. This modification is essential for activity because fatty acids are bound in thioester linkage to the sulfhydryl of the prosthetic group. In terms of tissue distribution, seed.

It is found in the plastid. It localises to the chloroplast. Its pathway is lipid metabolism; fatty acid biosynthesis. In terms of biological role, carrier of the growing fatty acid chain in fatty acid biosynthesis. The protein is Acyl carrier protein, chloroplastic (ACL1.A3) of Brassica napus (Rape).